The chain runs to 415 residues: Mechanosensing system component YbdG (415 aa).

Over 1-24 (MQDLISQVEDLAGIEIDHTTSMVM) the chain is Periplasmic. Residues 25 to 45 (IFGIIFLTAVVVHIILHWVVL) traverse the membrane as a helical segment. Residues 46-67 (RTFEKRAIASSRLWLQIITQNK) are Cytoplasmic-facing. Residues 68–88 (LFHRLAFTLQGIIVNIQAVFW) traverse the membrane as a helical segment. Topologically, residues 89 to 104 (LQKGTEAADILTTCAQ) are periplasmic. A helical membrane pass occupies residues 105–125 (LWIMMYALLSVFSLLDVILNL). Residues 126–148 (AQKFPAASQLPLKGIFQGIKLIG) are Cytoplasmic-facing. The chain crosses the membrane as a helical span at residues 149–169 (AILVGILMISLLIGQSPAILI). The Periplasmic segment spans residues 170-173 (SGLG). Residues 174–194 (AMAAVLMLVFKDPILGLVAGI) form a helical membrane-spanning segment. The Cytoplasmic portion of the chain corresponds to 195–415 (QLSANDMLKL…IRSLAGAFKQ (221 aa)).

This sequence belongs to the MscS (TC 1.A.23) family. As to quaternary structure, homoheptamer.

Its subcellular location is the cell inner membrane. Functions as a component of a mechanosensing system that transmits signals triggered by external osmotic changes to intracellular factors. This is Mechanosensing system component YbdG (ybdG) from Shigella flexneri.